The primary structure comprises 158 residues: ATP synthase subunit delta, mitochondrial (158 aa).

The transit peptide at 1 to 22 (MFRLTSARALFRVANVAARRTY) directs the protein to the mitochondrion.

Belongs to the ATPase epsilon chain family. As to quaternary structure, F-type ATPases have 2 components, CF(1) - the catalytic core - and CF(0) - the membrane proton channel. CF(1) has five subunits: alpha(3), beta(3), gamma(1), delta(1), epsilon(1). CF(0) has three main subunits: a, b and c.

Its subcellular location is the mitochondrion. The protein resides in the mitochondrion inner membrane. Mitochondrial membrane ATP synthase (F(1)F(0) ATP synthase or Complex V) produces ATP from ADP in the presence of a proton gradient across the membrane which is generated by electron transport complexes of the respiratory chain. F-type ATPases consist of two structural domains, F(1) - containing the extramembraneous catalytic core, and F(0) - containing the membrane proton channel, linked together by a central stalk and a peripheral stalk. During catalysis, ATP turnover in the catalytic domain of F(1) is coupled via a rotary mechanism of the central stalk subunits to proton translocation. Part of the complex F(1) domain and of the central stalk which is part of the complex rotary element. Rotation of the central stalk against the surrounding alpha(3)beta(3) subunits leads to hydrolysis of ATP in three separate catalytic sites on the beta subunits. The chain is ATP synthase subunit delta, mitochondrial (ATP16) from Eremothecium gossypii (strain ATCC 10895 / CBS 109.51 / FGSC 9923 / NRRL Y-1056) (Yeast).